The sequence spans 95 residues: MALRPLHDRVIVKRLDNERKTASGIVIPDSAAEKPDQGEVLAVGPGKKTEDGKILPVDLKVGDKVLFGKYAGQGVKVDGEELLVIREEEILAVIQ.

The protein belongs to the GroES chaperonin family. In terms of assembly, heptamer of 7 subunits arranged in a ring. Interacts with the chaperonin GroEL.

It localises to the cytoplasm. Its function is as follows. Together with the chaperonin GroEL, plays an essential role in assisting protein folding. The GroEL-GroES system forms a nano-cage that allows encapsulation of the non-native substrate proteins and provides a physical environment optimized to promote and accelerate protein folding. GroES binds to the apical surface of the GroEL ring, thereby capping the opening of the GroEL channel. The protein is Co-chaperonin GroES of Bordetella avium (strain 197N).